The primary structure comprises 96 residues: Small, acid-soluble spore protein gamma-type (96 aa).

Positions 1 to 15 are enriched in polar residues; it reads MNTKNFTPQESRTNA. Residues 1–96 form a disordered region; it reads MNTKNFTPQE…SEAKKRNNQQ (96 aa). Low complexity predominate over residues 16 to 27; it reads QQVRQQNQQSAQ. A compositionally biased stretch (polar residues) spans 28-41; it reads GTSSGFATEFASET. 2 consecutive repeats follow at residues 28-52 and 61-87; these read GTSSGFATEFASETNAQQVRQQNQQ and GATAGGFNTEFASETNVQQVRQQNQQS. 2 stretches are compositionally biased toward low complexity: residues 42–57 and 76–86; these read NAQQVRQQNQQSAQAN and NVQQVRQQNQQ.

It belongs to the gamma-type SASP family.

Its function is as follows. SASP are proteins degraded in the first minutes of spore germination and provide amino acids for both new protein synthesis and metabolism. These proteins may be involved in dormant spore's high resistance to UV light. In Laceyella sacchari (Thermoactinomyces thalpophilus), this protein is Small, acid-soluble spore protein gamma-type.